A 316-amino-acid polypeptide reads, in one-letter code: MSIKEQTLMTPYLQFDRNQWAALRDSVPMTLSEDEIARLKGINEDLSLEEVAEIYLPLSRLLNFYISSNLRRQAVLEQFLGTNGQRIPYIISIAGSVAVGKSTTARVLQALLSRWPEHRRVELITTDGFLHPNQVLKERGLMKKKGFPESYDMHRLVKFVSDLKSGVPNVTAPVYSHLIYDVIPDGDKTVVQPDILILEGLNVLQSGMDYPHDPHHVFVSDFVDFSIYVDAPEDLLQTWYINRFLKFREGAFTDPDSYFHNYAKLTKEEAINTAMTLWKEINWLNLKQNILPTRERASLILTKSANHAVEEVRLRK.

95 to 102 (GSVAVGKS) lines the ATP pocket.

It belongs to the prokaryotic pantothenate kinase family.

It is found in the cytoplasm. It catalyses the reaction (R)-pantothenate + ATP = (R)-4'-phosphopantothenate + ADP + H(+). The protein operates within cofactor biosynthesis; coenzyme A biosynthesis; CoA from (R)-pantothenate: step 1/5. The polypeptide is Pantothenate kinase (Escherichia coli O17:K52:H18 (strain UMN026 / ExPEC)).